We begin with the raw amino-acid sequence, 426 residues long: Tol-Pal system protein TolB (426 aa).

Positions 1–24 (MKLKSRYTSLISVVSIFFSSMVMA) are cleaved as a signal peptide.

The protein belongs to the TolB family. In terms of assembly, the Tol-Pal system is composed of five core proteins: the inner membrane proteins TolA, TolQ and TolR, the periplasmic protein TolB and the outer membrane protein Pal. They form a network linking the inner and outer membranes and the peptidoglycan layer.

Its subcellular location is the periplasm. Part of the Tol-Pal system, which plays a role in outer membrane invagination during cell division and is important for maintaining outer membrane integrity. The chain is Tol-Pal system protein TolB from Haemophilus ducreyi (strain 35000HP / ATCC 700724).